The primary structure comprises 351 residues: Nicotinate-nucleotide--dimethylbenzimidazole phosphoribosyltransferase (351 aa).

The active-site Proton acceptor is the E317.

Belongs to the CobT family.

The catalysed reaction is 5,6-dimethylbenzimidazole + nicotinate beta-D-ribonucleotide = alpha-ribazole 5'-phosphate + nicotinate + H(+). The protein operates within nucleoside biosynthesis; alpha-ribazole biosynthesis; alpha-ribazole from 5,6-dimethylbenzimidazole: step 1/2. Catalyzes the synthesis of alpha-ribazole-5'-phosphate from nicotinate mononucleotide (NAMN) and 5,6-dimethylbenzimidazole (DMB). The sequence is that of Nicotinate-nucleotide--dimethylbenzimidazole phosphoribosyltransferase from Pseudomonas putida (strain W619).